Reading from the N-terminus, the 372-residue chain is Chaperone protein DnaJ (372 aa).

A J domain is found at 5-70 (DYYDLLEVGR…EKRAGYDRYG (66 aa)). The CR-type zinc-finger motif lies at 134–212 (GIQAPIHYVT…CGGSGRRRDE (79 aa)). Zn(2+) contacts are provided by cysteine 147, cysteine 150, cysteine 164, cysteine 167, cysteine 186, cysteine 189, cysteine 200, and cysteine 203. CXXCXGXG motif repeat units follow at residues 147-154 (CDTCQGTG), 164-171 (CHTCQGSG), 186-193 (CTTCYGEG), and 200-207 (CKKCGGSG).

This sequence belongs to the DnaJ family. As to quaternary structure, homodimer. It depends on Zn(2+) as a cofactor.

The protein localises to the cytoplasm. Participates actively in the response to hyperosmotic and heat shock by preventing the aggregation of stress-denatured proteins and by disaggregating proteins, also in an autonomous, DnaK-independent fashion. Unfolded proteins bind initially to DnaJ; upon interaction with the DnaJ-bound protein, DnaK hydrolyzes its bound ATP, resulting in the formation of a stable complex. GrpE releases ADP from DnaK; ATP binding to DnaK triggers the release of the substrate protein, thus completing the reaction cycle. Several rounds of ATP-dependent interactions between DnaJ, DnaK and GrpE are required for fully efficient folding. Also involved, together with DnaK and GrpE, in the DNA replication of plasmids through activation of initiation proteins. The chain is Chaperone protein DnaJ from Wolbachia pipientis wMel.